Consider the following 156-residue polypeptide: ATP synthase subunit b (156 aa).

A helical membrane pass occupies residues 5–25 (LTMIGQAIAFFIFVVFCMKYV).

The protein belongs to the ATPase B chain family. In terms of assembly, F-type ATPases have 2 components, F(1) - the catalytic core - and F(0) - the membrane proton channel. F(1) has five subunits: alpha(3), beta(3), gamma(1), delta(1), epsilon(1). F(0) has three main subunits: a(1), b(2) and c(10-14). The alpha and beta chains form an alternating ring which encloses part of the gamma chain. F(1) is attached to F(0) by a central stalk formed by the gamma and epsilon chains, while a peripheral stalk is formed by the delta and b chains.

The protein resides in the cell inner membrane. Its function is as follows. F(1)F(0) ATP synthase produces ATP from ADP in the presence of a proton or sodium gradient. F-type ATPases consist of two structural domains, F(1) containing the extramembraneous catalytic core and F(0) containing the membrane proton channel, linked together by a central stalk and a peripheral stalk. During catalysis, ATP synthesis in the catalytic domain of F(1) is coupled via a rotary mechanism of the central stalk subunits to proton translocation. Component of the F(0) channel, it forms part of the peripheral stalk, linking F(1) to F(0). The sequence is that of ATP synthase subunit b from Hahella chejuensis (strain KCTC 2396).